The following is a 31-amino-acid chain: Photosystem II reaction center protein T (31 aa).

Residues 3-23 (ALVYTFLLVGTLGIIFFAIFF) form a helical membrane-spanning segment.

This sequence belongs to the PsbT family. PSII is composed of 1 copy each of membrane proteins PsbA, PsbB, PsbC, PsbD, PsbE, PsbF, PsbH, PsbI, PsbJ, PsbK, PsbL, PsbM, PsbT, PsbY, PsbZ, Psb30/Ycf12, at least 3 peripheral proteins of the oxygen-evolving complex and a large number of cofactors. It forms dimeric complexes.

It localises to the plastid. Its subcellular location is the chloroplast thylakoid membrane. Functionally, found at the monomer-monomer interface of the photosystem II (PS II) dimer, plays a role in assembly and dimerization of PSII. PSII is a light-driven water plastoquinone oxidoreductase, using light energy to abstract electrons from H(2)O, generating a proton gradient subsequently used for ATP formation. This chain is Photosystem II reaction center protein T, found in Chlorella vulgaris (Green alga).